A 787-amino-acid chain; its full sequence is Protocadherin beta-15 (787 aa).

The signal sequence occupies residues 1–26 (MEPAGERFPEQRQVLILLLLLEVTLA). At 27 to 690 (GWEPRRYSVM…AQADSLTVYL (664 aa)) the chain is on the extracellular side. Cadherin domains lie at 35–133 (VMEE…SPEF), 138–242 (MTLK…APEF), 247–347 (YEVQ…FPEL), 352–451 (LTSP…APAF), and 456–561 (YTLF…SPFV). N418 carries N-linked (GlcNAc...) asparagine glycosylation. An N-linked (GlcNAc...) asparagine glycan is attached at N567. Residues 568 to 671 (GSAPCTELVP…LVDGFSQPYL (104 aa)) enclose the Cadherin 6 domain. Residues 691–711 (VVALASVSSLFLFSVFLFVAV) traverse the membrane as a helical segment. Residues 712 to 787 (RLCRRSRAAS…DSRRKSEFLE (76 aa)) are Cytoplasmic-facing.

It is found in the cell membrane. In terms of biological role, potential calcium-dependent cell-adhesion protein. May be involved in the establishment and maintenance of specific neuronal connections in the brain. In Homo sapiens (Human), this protein is Protocadherin beta-15 (PCDHB15).